A 228-amino-acid chain; its full sequence is Max-interacting protein 1 (228 aa).

Disordered regions lie at residues Y30–E76 and S160–S228. Basic residues predominate over residues Q43–K56. The span at H57 to S70 shows a compositional bias: polar residues. Residues A67–L119 enclose the bHLH domain. Residues E173 to S183 show a composition bias toward acidic residues. The span at S207–S228 shows a compositional bias: polar residues.

Efficient DNA binding requires dimerization with another bHLH protein. Binds DNA as a heterodimer with MAX. Interacts with SMC3. Interacts with RNF17.

The protein localises to the nucleus. Transcriptional repressor. MXI1 binds with MAX to form a sequence-specific DNA-binding protein complex which recognizes the core sequence 5'-CAC[GA]TG-3'. MXI1 thus antagonizes MYC transcriptional activity by competing for MAX. Isoform Short, which lacks a segment, has a much stronger suppressive potential and associates with a SIN3 homologous protein. In Mus musculus (Mouse), this protein is Max-interacting protein 1 (Mxi1).